We begin with the raw amino-acid sequence, 807 residues long: Spondin-1 (807 aa).

The N-terminal stretch at 1-28 (MRLSPVSLRLSRGPALLALALPLAAALA) is a signal peptide. The Reelin domain occupies 29–194 (FSDETLDKVT…DPTLDGVTDR (166 aa)). Disulfide bonds link Cys-44/Cys-128, Cys-156/Cys-182, Cys-199/Cys-336, Cys-200/Cys-340, Cys-202/Cys-415, Cys-443/Cys-480, Cys-454/Cys-489, Cys-459/Cys-494, Cys-502/Cys-538, Cys-513/Cys-517, Cys-548/Cys-554, Cys-559/Cys-595, Cys-570/Cys-574, Cys-605/Cys-610, Cys-615/Cys-650, Cys-626/Cys-630, and Cys-660/Cys-665. The Spondin domain maps to 195 to 388 (PILDCCACGT…LTSLDHPQSP (194 aa)). N-linked (GlcNAc...) asparagine glycosylation is present at Asn-214. Residues Asp-325, Asp-354, and Asp-358 each contribute to the Ca(2+) site. 5 TSP type-1 domains span residues 442 to 495 (TCIY…PGCS), 501 to 555 (TCTM…EECS), 558 to 611 (SCLV…PECH), 614 to 666 (PCLL…PECP), and 668 to 721 (DCEL…RKCL). The N-linked (GlcNAc...) asparagine glycan is linked to Asn-681. The span at 732-746 (REARESRRSEQLREE) shows a compositional bias: basic and acidic residues. The tract at residues 732 to 752 (REARESRRSEQLREESDGEQF) is disordered. Residues 754–806 (GCRMRPWTAWSECTKLCGGGIQERYMTVKKRFKSSQFTSCKDKKEIRACNVHP) form the TSP type-1 6 domain.

Binds to the central extracellular domain of APP and inhibits beta-secretase cleavage of APP.

The protein localises to the secreted. Its subcellular location is the extracellular space. It is found in the extracellular matrix. Its function is as follows. Cell adhesion protein that promotes the attachment of spinal cord and sensory neuron cells and the outgrowth of neurites in vitro. May contribute to the growth and guidance of axons in both the spinal cord and the PNS. This is Spondin-1 (Spon1) from Mus musculus (Mouse).